The sequence spans 240 residues: Thyroid transcription factor 1-associated protein 26 (240 aa).

The segment at 104-181 is disordered; sequence LRKQQRKAGL…QEEYERVQAK (78 aa). Residues 131–149 are compositionally biased toward low complexity; sequence TEQTSSEEPPGGHQPQPEE. The segment covering 171–181 has biased composition (basic and acidic residues); the sequence is AQEEYERVQAK.

Belongs to the TAP26 family. Interacts with NKX2-1.

The protein resides in the nucleus. In terms of biological role, component of the transcription complexes of the pulmonary surfactant-associated protein-B (SFTPB) and -C (SFTPC). Enhances homeobox protein Nkx-2.1-activated SFTPB and SFTPC promoter activities. In Mus musculus (Mouse), this protein is Thyroid transcription factor 1-associated protein 26 (Ccdc59).